The chain runs to 152 residues: Ubiquitin-conjugating enzyme E2 1 (152 aa).

One can recognise a UBC core domain in the interval 4 to 150 (PARKRLMRDF…VRDVVEQSWT (147 aa)). Residue cysteine 88 is the Glycyl thioester intermediate of the active site. The segment at 119-152 (NSPANSEAARMYSESKREYNRRVRDVVEQSWTAD) is disordered. Positions 131–145 (SESKREYNRRVRDVV) are enriched in basic and acidic residues.

It belongs to the ubiquitin-conjugating enzyme family. As to expression, ubiquitously expressed.

It catalyses the reaction S-ubiquitinyl-[E1 ubiquitin-activating enzyme]-L-cysteine + [E2 ubiquitin-conjugating enzyme]-L-cysteine = [E1 ubiquitin-activating enzyme]-L-cysteine + S-ubiquitinyl-[E2 ubiquitin-conjugating enzyme]-L-cysteine.. It functions in the pathway protein modification; protein ubiquitination. Accepts the ubiquitin from the E1 complex and catalyzes its covalent attachment to other proteins. This chain is Ubiquitin-conjugating enzyme E2 1 (UBC1), found in Arabidopsis thaliana (Mouse-ear cress).